The sequence spans 610 residues: Elongation factor 4 (610 aa).

Residues 11-193 (EKIRNFSIIA…QIVEKVPAPT (183 aa)) form the tr-type G domain. Residues 23 to 28 (DHGKST) and 140 to 143 (NKID) contribute to the GTP site.

It belongs to the TRAFAC class translation factor GTPase superfamily. Classic translation factor GTPase family. LepA subfamily.

The protein resides in the cell membrane. The catalysed reaction is GTP + H2O = GDP + phosphate + H(+). Required for accurate and efficient protein synthesis under certain stress conditions. May act as a fidelity factor of the translation reaction, by catalyzing a one-codon backward translocation of tRNAs on improperly translocated ribosomes. Back-translocation proceeds from a post-translocation (POST) complex to a pre-translocation (PRE) complex, thus giving elongation factor G a second chance to translocate the tRNAs correctly. Binds to ribosomes in a GTP-dependent manner. The polypeptide is Elongation factor 4 (Streptococcus pyogenes serotype M1).